Here is a 243-residue protein sequence, read N- to C-terminus: Thiamin pyrophosphokinase 1 (243 aa).

This sequence belongs to the thiamine pyrophosphokinase family.

The enzyme catalyses thiamine + ATP = thiamine diphosphate + AMP + H(+). It participates in cofactor biosynthesis; thiamine diphosphate biosynthesis; thiamine diphosphate from thiamine: step 1/1. Catalyzes the phosphorylation of thiamine to thiamine pyrophosphate. Functions cell non-autonomously. This chain is Thiamin pyrophosphokinase 1, found in Caenorhabditis elegans.